The sequence spans 466 residues: Delta-1 crystallin (466 aa).

Blocked amino end (Ala) is present on Ala-2.

Belongs to the lyase 1 family. Argininosuccinate lyase subfamily. Homotetramer. The N-terminus is blocked. As to expression, eye lens.

In terms of biological role, delta crystallin, the principal crystallin in embryonic lens, is found only in birds and reptiles. In Gallus gallus (Chicken), this protein is Delta-1 crystallin (ASL1).